A 517-amino-acid chain; its full sequence is Ribose import ATP-binding protein RbsA 1 (517 aa).

2 ABC transporter domains span residues 11–251 (LEMR…VGRD) and 263–507 (YDPG…ALAT). 43-50 (GENGAGKS) contacts ATP.

Belongs to the ABC transporter superfamily. Ribose importer (TC 3.A.1.2.1) family. In terms of assembly, the complex is composed of an ATP-binding protein (RbsA), two transmembrane proteins (RbsC) and a solute-binding protein (RbsB).

Its subcellular location is the cell inner membrane. The catalysed reaction is D-ribose(out) + ATP + H2O = D-ribose(in) + ADP + phosphate + H(+). Functionally, part of the ABC transporter complex RbsABC involved in ribose import. Responsible for energy coupling to the transport system. The chain is Ribose import ATP-binding protein RbsA 1 from Burkholderia cenocepacia (strain HI2424).